Consider the following 393-residue polypeptide: Phosphoglycerate kinase (393 aa).

Substrate contacts are provided by residues 21–23, 59–62, Arg-118, and Arg-151; these read DFN and HLGR. ATP-binding positions include Lys-201, Glu-323, and 349 to 352; that span reads GGDT.

This sequence belongs to the phosphoglycerate kinase family. As to quaternary structure, monomer.

The protein resides in the cytoplasm. The catalysed reaction is (2R)-3-phosphoglycerate + ATP = (2R)-3-phospho-glyceroyl phosphate + ADP. Its pathway is carbohydrate degradation; glycolysis; pyruvate from D-glyceraldehyde 3-phosphate: step 2/5. This is Phosphoglycerate kinase from Pelotomaculum thermopropionicum (strain DSM 13744 / JCM 10971 / SI).